A 282-amino-acid polypeptide reads, in one-letter code: Pantothenate synthetase (282 aa).

Residue 26–33 coordinates ATP; that stretch reads MGNLHEGH. His33 (proton donor) is an active-site residue. Gln57 contacts (R)-pantoate. Gln57 contributes to the beta-alanine binding site. Position 144 to 147 (144 to 147) interacts with ATP; sequence GKKD. Residue Gln150 coordinates (R)-pantoate. ATP-binding positions include Val173 and 181–184; that span reads LSSR.

Belongs to the pantothenate synthetase family. As to quaternary structure, homodimer.

The protein resides in the cytoplasm. It carries out the reaction (R)-pantoate + beta-alanine + ATP = (R)-pantothenate + AMP + diphosphate + H(+). It participates in cofactor biosynthesis; (R)-pantothenate biosynthesis; (R)-pantothenate from (R)-pantoate and beta-alanine: step 1/1. In terms of biological role, catalyzes the condensation of pantoate with beta-alanine in an ATP-dependent reaction via a pantoyl-adenylate intermediate. This is Pantothenate synthetase from Cupriavidus taiwanensis (strain DSM 17343 / BCRC 17206 / CCUG 44338 / CIP 107171 / LMG 19424 / R1) (Ralstonia taiwanensis (strain LMG 19424)).